A 612-amino-acid polypeptide reads, in one-letter code: uncharacterized protein (612 aa).

The segment at residues 6–32 is a DNA-binding region (zn(2)-C6 fungal-type); it reads CLYCRRRKIKCDKNRPCHNCFVAKREC.

The protein resides in the cytoplasm. It localises to the nucleus. This is an uncharacterized protein from Schizosaccharomyces pombe (strain 972 / ATCC 24843) (Fission yeast).